A 291-amino-acid chain; its full sequence is Homoserine kinase (291 aa).

80–90 (RPASGLGSSAA) serves as a coordination point for ATP.

The protein belongs to the GHMP kinase family. Homoserine kinase subfamily.

It localises to the cytoplasm. It carries out the reaction L-homoserine + ATP = O-phospho-L-homoserine + ADP + H(+). It functions in the pathway amino-acid biosynthesis; L-threonine biosynthesis; L-threonine from L-aspartate: step 4/5. Catalyzes the ATP-dependent phosphorylation of L-homoserine to L-homoserine phosphate. In Natronomonas pharaonis (strain ATCC 35678 / DSM 2160 / CIP 103997 / JCM 8858 / NBRC 14720 / NCIMB 2260 / Gabara) (Halobacterium pharaonis), this protein is Homoserine kinase.